A 281-amino-acid chain; its full sequence is MKLTGEVALITGGASGLGRALVDRFVAEGARVAVLDKSAERLRELEVAHGGNAVGVVGDVRSLQDQKRAAERCLAAFGKIDTLIPNAGIWDYSTALADLPEDKIDAAFDDIFHVNVKGYIHAVKACLPALVSSRGSVVFTISNAGFYPNGGGPLYTATKHAVVGLVRQMAFELAPHVRVNGVAPGGMNTDLRGPSSLGLSEQSISSVPLADMLKSVLPIGRMPALEEYTGAYVFFATRGDSLPATGALLNYDGGMGVRGFLTAAGGADLPEKLNINREGQE.

Residue 10–34 (ITGGASGLGRALVDRFVAEGARVAV) coordinates NAD(+). Residue S142 participates in substrate binding. Y155 functions as the Proton acceptor in the catalytic mechanism.

This sequence belongs to the short-chain dehydrogenases/reductases (SDR) family. As to quaternary structure, homotetramer.

It carries out the reaction (2R,3S)-3-phenylcyclohexa-3,5-diene-1,2-diol + NAD(+) = biphenyl-2,3-diol + NADH + H(+). It participates in xenobiotic degradation; biphenyl degradation; 2-hydroxy-2,4-pentadienoate and benzoate from biphenyl: step 2/4. The protein is Cis-2,3-dihydrobiphenyl-2,3-diol dehydrogenase (bphB) of Comamonas testosteroni (Pseudomonas testosteroni).